The primary structure comprises 31 residues: Photosystem I reaction center subunit XII (31 aa).

A helical transmembrane segment spans residues 7-26 (QVYVALVIALLPAVLAFRLS).

The protein belongs to the PsaM family.

Its subcellular location is the cellular thylakoid membrane. The chain is Photosystem I reaction center subunit XII from Thermosynechococcus vestitus (strain NIES-2133 / IAM M-273 / BP-1).